A 425-amino-acid chain; its full sequence is 3-phosphoshikimate 1-carboxyvinyltransferase (425 aa).

Residues Lys22, Ser23, and Arg27 each coordinate 3-phosphoshikimate. Lys22 contributes to the phosphoenolpyruvate binding site. Phosphoenolpyruvate is bound by residues Gly95 and Arg123. 7 residues coordinate 3-phosphoshikimate: Ser169, Ser170, Gln171, Ser197, Asp313, Asn336, and Lys340. Phosphoenolpyruvate is bound at residue Gln171. The active-site Proton acceptor is Asp313. Residues Arg344, Arg386, and Lys411 each contribute to the phosphoenolpyruvate site.

Belongs to the EPSP synthase family. In terms of assembly, monomer.

It localises to the cytoplasm. The enzyme catalyses 3-phosphoshikimate + phosphoenolpyruvate = 5-O-(1-carboxyvinyl)-3-phosphoshikimate + phosphate. It functions in the pathway metabolic intermediate biosynthesis; chorismate biosynthesis; chorismate from D-erythrose 4-phosphate and phosphoenolpyruvate: step 6/7. Catalyzes the transfer of the enolpyruvyl moiety of phosphoenolpyruvate (PEP) to the 5-hydroxyl of shikimate-3-phosphate (S3P) to produce enolpyruvyl shikimate-3-phosphate and inorganic phosphate. This chain is 3-phosphoshikimate 1-carboxyvinyltransferase, found in Pseudoalteromonas translucida (strain TAC 125).